A 175-amino-acid chain; its full sequence is Translation initiation factor IF-3 (175 aa).

Belongs to the IF-3 family. As to quaternary structure, monomer.

The protein resides in the cytoplasm. Its function is as follows. IF-3 binds to the 30S ribosomal subunit and shifts the equilibrium between 70S ribosomes and their 50S and 30S subunits in favor of the free subunits, thus enhancing the availability of 30S subunits on which protein synthesis initiation begins. This is Translation initiation factor IF-3 from Staphylococcus saprophyticus subsp. saprophyticus (strain ATCC 15305 / DSM 20229 / NCIMB 8711 / NCTC 7292 / S-41).